A 585-amino-acid chain; its full sequence is MASVVVKTIWQSKEIHEAGDPPAGVESRAQLVPEAPGGVTSPAKGITKKKKAVSFHGVEPRMSHEPMHWCLNLKRSSACTNVSLLNLAAMEPDSSGTDSTTEDSGPLALPGPPASPTTPWAPEDPDITELLSGVNSGLVRAKDSITSLKEKTTRVNQHVQTLQSECSVLSENLERRRQEAEELEGYCSQLKGPRPDVLTQENCRKVTRSVEDAEIKTNVLKQNSALLEEKLRYLQQQLQDETPRRQEAELQELEQKLEAGLSRHGLGPTTPIQGCSGPPGSPEEPPRPRGLPSNGWGMAIRAGEGPSLSEQELQKVSSGLEELRREVSSLAARWHQEEGAVQEALRLLGGLGGRLDGFLGQWERAQREQAQSARGLQELRGRADELCTMVERSAVSVASLRSELEALGPVKPILEELGRQLQNSRRGPDHVLNLDRPAQGPCPRCASQGQQLSTESLQQLLERALTPLVDEVKQKGLAPACPSCQRLHKKILELERQALAKHVRAEALSSTLRLAQDEAVRAKNLLLTDKMKPEEKVATLDYMHLKMCSLHDQLSHLPLEGSTGAMGGGSTGGAPPKRGGPGSEQ.

Over residues 91–108 (EPDSSGTDSTTEDSGPLA) the composition is skewed to low complexity. A disordered region spans residues 91 to 126 (EPDSSGTDSTTEDSGPLALPGPPASPTTPWAPEDPD). 3 positions are modified to phosphoserine: Ser224, Ser281, and Ser309. Disordered regions lie at residues 262–309 (SRHG…PSLS) and 559–585 (LEGSTGAMGGGSTGGAPPKRGGPGSEQ).

In terms of processing, phosphorylated on serine residue(s) by STK22A/TSSK1 and STK22B/TSSK2.

The protein resides in the cytoplasm. It localises to the cytoskeleton. It is found in the microtubule organizing center. The protein localises to the centrosome. Its subcellular location is the centriole. In terms of biological role, may play a role in testicular physiology, most probably in the process of spermatogenesis or spermatid development. The polypeptide is Testis-specific serine kinase substrate (Tsks) (Rattus norvegicus (Rat)).